Here is a 612-residue protein sequence, read N- to C-terminus: Apoptosis-inducing factor 1, mitochondrial (612 aa).

2 consecutive short sequence motifs (mitochondrial localization signal) follow at residues 1 to 30 and 62 to 88; these read MFRCGGLAGAFKQKLVPLVRSVCVQRPKQR and KMDNSVLVLIVGLSTIGAGAYAYKTIK. Residues 1 to 53 constitute a mitochondrion transit peptide; sequence MFRCGGLAGAFKQKLVPLVRSVCVQRPKQRNRLPGNLFQQWRVPLELQMARQM. 2 consecutive propeptides (removed in mature form) follow at residues 54-100 and 55-101; these read ASSG…RIMG and SSGP…IMGL. Lys-108 is modified (N6-succinyllysine). Phosphoserine is present on Ser-115. The segment at 133–482 is FAD-dependent oxidoreductase; the sequence is FLLIGGGTAA…KPYWHQSMFW (350 aa). Residues 137 to 141, 163 to 164, Arg-171, and Lys-176 each bind FAD; these read GGGTA and ED. Trp-195 contacts NAD(+). FAD is bound at residue Val-232. A Glycyl lysine isopeptide (Lys-Gly) (interchain with G-Cter in ubiquitin) cross-link involves residue Lys-254. At Ser-267 the chain carries Phosphoserine. Arg-284 is a binding site for FAD. NAD(+) is bound by residues 307-310, Glu-335, and Lys-341; that span reads GGFL. Ser-370 is modified (phosphoserine). At Lys-387 the chain carries N6-acetyllysine. Gly-398 lines the NAD(+) pocket. Position 437 (Asp-437) interacts with FAD. The Nuclear localization signal motif lies at 445–450; that stretch reads KLGRRR. Residues 452 to 453, Trp-482, and Glu-492 each bind NAD(+); that span reads EH. FAD contacts are provided by residues 453-454 and Trp-482; that span reads HH. A compositionally biased stretch (polar residues) spans 512–528; the sequence is AQDNPKSATEQSGTGIR. Positions 512 to 551 are disordered; the sequence is AQDNPKSATEQSGTGIRSESETESEASEITIPPSDPAVPQ. Thr-520 is subject to Phosphothreonine. Phosphoserine occurs at positions 523 and 529. Asn-582 serves as a coordination point for NAD(+). Lys-592 bears the N6-acetyllysine mark.

This sequence belongs to the FAD-dependent oxidoreductase family. As to quaternary structure, monomer (oxidized form). Homodimer (reduced form). Upon reduction with NADH, undergoes dimerization and forms tight, long-lived FADH2-NAD charge transfer complexes (CTC) resistant to oxidation. Also dimerizes with isoform 3 preventing its release from mitochondria. Interacts with XIAP/BIRC4. Interacts (via N-terminus) with EIF3G (via C-terminus). Interacts with PRELID1. Interacts with CHCHD4; the interaction increases in presence of NADH. Interacts with processed form of PARP1 (Poly [ADP-ribose] polymerase 1, processed C-terminus); interaction is mediated with poly-ADP-ribose chains attached to PARP1, promoting translocation into the nucleus. FAD serves as cofactor. Post-translationally, under normal conditions, a 54-residue N-terminal segment is first proteolytically removed during or just after translocation into the mitochondrial intermembrane space (IMS) by the mitochondrial processing peptidase (MPP) to form the inner-membrane-anchored mature form (AIFmit). During apoptosis, it is further proteolytically processed at amino-acid position 101 leading to the generation of the mature form, which is confined to the mitochondrial IMS in a soluble form (AIFsol). AIFsol is released to the cytoplasm in response to specific death signals, and translocated to the nucleus, where it induces nuclear apoptosis in a caspase-independent manner. In terms of processing, ubiquitination by XIAP/BIRC4 does not lead to proteasomal degradation. Ubiquitination at Lys-254 by XIAP/BIRC4 blocks its ability to bind DNA and induce chromatin degradation, thereby inhibiting its ability to induce cell death.

The protein resides in the mitochondrion intermembrane space. Its subcellular location is the mitochondrion inner membrane. The protein localises to the cytoplasm. It is found in the nucleus. It localises to the perinuclear region. The catalysed reaction is A + NADH + H(+) = AH2 + NAD(+). Functions both as NADH oxidoreductase and as regulator of apoptosis. In response to apoptotic stimuli, it is released from the mitochondrion intermembrane space into the cytosol and to the nucleus, where it functions as a proapoptotic factor in a caspase-independent pathway. Release into the cytoplasm is mediated upon binding to poly-ADP-ribose chains. The soluble form (AIFsol) found in the nucleus induces 'parthanatos' i.e. caspase-independent fragmentation of chromosomal DNA. Binds to DNA in a sequence-independent manner. Interacts with EIF3G, and thereby inhibits the EIF3 machinery and protein synthesis, and activates caspase-7 to amplify apoptosis. Plays a critical role in caspase-independent, pyknotic cell death in hydrogen peroxide-exposed cells. In contrast, participates in normal mitochondrial metabolism. Plays an important role in the regulation of respiratory chain biogenesis by interacting with CHCHD4 and controlling CHCHD4 mitochondrial import. The sequence is that of Apoptosis-inducing factor 1, mitochondrial (Aifm1) from Rattus norvegicus (Rat).